We begin with the raw amino-acid sequence, 51 residues long: Putative antitoxin VapB6 (51 aa).

Antitoxin component of a possible type II toxin-antitoxin (TA) system. The cognate toxin is VapC6. The polypeptide is Putative antitoxin VapB6 (vapB6) (Mycobacterium tuberculosis (strain CDC 1551 / Oshkosh)).